The chain runs to 174 residues: Ribosome maturation factor RimM (174 aa).

One can recognise a PRC barrel domain in the interval 95-174 (DDEFYWRDLI…QIQVEWPSDF (80 aa)).

This sequence belongs to the RimM family. In terms of assembly, binds ribosomal protein uS19.

It localises to the cytoplasm. An accessory protein needed during the final step in the assembly of 30S ribosomal subunit, possibly for assembly of the head region. Essential for efficient processing of 16S rRNA. May be needed both before and after RbfA during the maturation of 16S rRNA. It has affinity for free ribosomal 30S subunits but not for 70S ribosomes. The chain is Ribosome maturation factor RimM from Idiomarina loihiensis (strain ATCC BAA-735 / DSM 15497 / L2-TR).